The sequence spans 282 residues: Undecaprenyl-diphosphatase (282 aa).

The next 7 membrane-spanning stretches (helical) occupy residues 6 to 26 (LYFV…FIPV), 45 to 65 (SGKV…MWIF), 85 to 105 (LFTR…AIFI), 112 to 132 (FYHP…MLWV), 200 to 220 (ATEF…VYDM), 230 to 250 (HDLG…LLVV), and 262 to 282 (YRGF…WLAF).

This sequence belongs to the UppP family.

The protein resides in the cell inner membrane. It catalyses the reaction di-trans,octa-cis-undecaprenyl diphosphate + H2O = di-trans,octa-cis-undecaprenyl phosphate + phosphate + H(+). Its function is as follows. Catalyzes the dephosphorylation of undecaprenyl diphosphate (UPP). Confers resistance to bacitracin. The protein is Undecaprenyl-diphosphatase of Bordetella avium (strain 197N).